A 179-amino-acid polypeptide reads, in one-letter code: MAELATIARPYAEALFRVAEGGDIAAWSTLVQELAQVAHLPEVLSVASSPKVTRKQVAELLLVAVKSPLAAGAEAKNFVQMLVDNHRIALLPEIAEQFEALKNEREGAADAEIVSAFPLEGAELDSLVSGLERKFKRKLKPTVEVDSSLIGGVRVTVGDEVLDTSVRARLASMQAALTA.

It belongs to the ATPase delta chain family. F-type ATPases have 2 components, F(1) - the catalytic core - and F(0) - the membrane proton channel. F(1) has five subunits: alpha(3), beta(3), gamma(1), delta(1), epsilon(1). F(0) has three main subunits: a(1), b(2) and c(10-14). The alpha and beta chains form an alternating ring which encloses part of the gamma chain. F(1) is attached to F(0) by a central stalk formed by the gamma and epsilon chains, while a peripheral stalk is formed by the delta and b chains.

Its subcellular location is the cell inner membrane. F(1)F(0) ATP synthase produces ATP from ADP in the presence of a proton or sodium gradient. F-type ATPases consist of two structural domains, F(1) containing the extramembraneous catalytic core and F(0) containing the membrane proton channel, linked together by a central stalk and a peripheral stalk. During catalysis, ATP synthesis in the catalytic domain of F(1) is coupled via a rotary mechanism of the central stalk subunits to proton translocation. In terms of biological role, this protein is part of the stalk that links CF(0) to CF(1). It either transmits conformational changes from CF(0) to CF(1) or is implicated in proton conduction. The sequence is that of ATP synthase subunit delta from Burkholderia vietnamiensis (strain G4 / LMG 22486) (Burkholderia cepacia (strain R1808)).